The chain runs to 562 residues: Dihydroxy-acid dehydratase (562 aa).

Asp80 lines the Mg(2+) pocket. Residue Cys121 coordinates [2Fe-2S] cluster. The Mg(2+) site is built by Asp122 and Lys123. Lys123 bears the N6-carboxylysine mark. Cys194 lines the [2Fe-2S] cluster pocket. A Mg(2+)-binding site is contributed by Glu446. Ser472 serves as the catalytic Proton acceptor.

This sequence belongs to the IlvD/Edd family. As to quaternary structure, homodimer. Requires [2Fe-2S] cluster as cofactor. Mg(2+) serves as cofactor.

It catalyses the reaction (2R)-2,3-dihydroxy-3-methylbutanoate = 3-methyl-2-oxobutanoate + H2O. The enzyme catalyses (2R,3R)-2,3-dihydroxy-3-methylpentanoate = (S)-3-methyl-2-oxopentanoate + H2O. It participates in amino-acid biosynthesis; L-isoleucine biosynthesis; L-isoleucine from 2-oxobutanoate: step 3/4. Its pathway is amino-acid biosynthesis; L-valine biosynthesis; L-valine from pyruvate: step 3/4. Its function is as follows. Functions in the biosynthesis of branched-chain amino acids. Catalyzes the dehydration of (2R,3R)-2,3-dihydroxy-3-methylpentanoate (2,3-dihydroxy-3-methylvalerate) into 2-oxo-3-methylpentanoate (2-oxo-3-methylvalerate) and of (2R)-2,3-dihydroxy-3-methylbutanoate (2,3-dihydroxyisovalerate) into 2-oxo-3-methylbutanoate (2-oxoisovalerate), the penultimate precursor to L-isoleucine and L-valine, respectively. This Macrococcus caseolyticus (strain JCSC5402) (Macrococcoides caseolyticum) protein is Dihydroxy-acid dehydratase.